The primary structure comprises 44 residues: Thioredoxin (44 aa).

The Thioredoxin domain occupies 2–44 (IELDKSNFEEEVLKAEGTVLVDFWSPSCEPCKALMPHVHDFEE). Cysteine 29 and cysteine 32 are oxidised to a cystine.

This sequence belongs to the thioredoxin family.

Its function is as follows. Participates in various redox reactions through the reversible oxidation of its active center dithiol to a disulfide and catalyzes dithiol-disulfide exchange reactions. This Tissierella creatinophila protein is Thioredoxin (trxA).